A 641-amino-acid polypeptide reads, in one-letter code: Uromodulin (641 aa).

The N-terminal stretch at 1 to 24 (MGQPPLTWMLMVVVASWFITTAAT) is a signal peptide. N-linked (GlcNAc...) asparagine glycosylation is present at Asn-25. In terms of domain architecture, EGF-like 1 spans 28 to 64 (EARWCSECHSNATCTEDEAVTTCTCQEGFTGDGLTCV). 21 disulfide bridges follow: Cys-32-Cys-41, Cys-35-Cys-50, Cys-52-Cys-63, Cys-69-Cys-83, Cys-77-Cys-92, Cys-94-Cys-106, Cys-112-Cys-126, Cys-120-Cys-135, Cys-137-Cys-148, Cys-150-Cys-161, Cys-155-Cys-170, Cys-174-Cys-267, Cys-195-Cys-282, Cys-217-Cys-255, Cys-223-Cys-287, Cys-248-Cys-256, Cys-297-Cys-306, Cys-300-Cys-315, Cys-317-Cys-347, Cys-335-Cys-425, and Cys-366-Cys-389. Residues 65 to 107 (DLDECAIPGAHNCSANSSCVNTPGSFSCVCPEGFRLSPGLGCT) enclose the EGF-like 2; calcium-binding domain. Asn-76 carries an N-linked (GlcNAc...) asparagine glycan. The EGF-like 3; calcium-binding domain maps to 108–149 (DVDECAEPGLSHCHALATCVNVVGNYLCVCPAGYRGDGWHCE). Residues 150-171 (CSPGSCGPGLDCVPEGDALVCA) form a beta hairpin region. Positions 172-291 (DPCQAHRTLD…CHLAYCTDPS (120 aa)) are D10C. Asn-232 carries an N-linked (GlcNAc...) asparagine glycan. An N-linked (GlcNAc...) asparagine glycan is attached at Asn-275. In terms of domain architecture, EGF-like 4 spans 292–323 (SVEGTCEECSIDEDCKSDNGRWHCQCKQDFNI). Residue Asn-322 is glycosylated (N-linked (GlcNAc...) asparagine). A ZP-N region spans residues 334–429 (ECGANDMKVS…KINFACSYPL (96 aa)). A ZP domain is found at 334-589 (ECGANDMKVS…PTCSGTRFRS (256 aa)). A flexible ZP-N/ZP-C linker; important for secretion and polymerization into filaments region spans residues 430-453 (DMKVSLKTSLQPVVSALNITVGGT). Asn-447 carries N-linked (GlcNAc...) asparagine glycosylation. Residues 454 to 464 (GMFTVRMALFQ) form an internal hydrophobic patch (IHP) region. Residues 454 to 589 (GMFTVRMALF…PTCSGTRFRS (136 aa)) form a ZP-C region. 3 cysteine pairs are disulfide-bonded: Cys-506–Cys-566, Cys-527–Cys-582, and Cys-571–Cys-578. The interval 586 to 589 (RFRS) is essential for cleavage by HPN. Residues 598-606 (VLNLGPITR) are external hydrophobic patch (EHP); regulates polymerization into filaments. Ser-614 is lipidated: GPI-anchor amidated serine. Residues 615 to 641 (RAAFSSLGLLKVWLPLLLSATLTLTFQ) constitute a propeptide, removed in mature form.

Homodimer that then polymerizes into long filaments. The filaments can additionally assemble laterally to form a sheet. The filaments consist of a zigzag-shaped backbone with laterally protruding arms which interact with bacterial adhesin fimH. Two fimH molecules can bind to a single UMOD monomer. N-glycosylated. In terms of processing, proteolytically cleaved at a conserved C-terminal proteolytic cleavage site to generate the secreted form found in urine. This cleavage is catalyzed by HPN.

It is found in the apical cell membrane. The protein localises to the basolateral cell membrane. The protein resides in the cell projection. It localises to the cilium membrane. Its subcellular location is the secreted. In terms of biological role, functions in biogenesis and organization of the apical membrane of epithelial cells of the thick ascending limb of Henle's loop (TALH), where it promotes formation of complex filamentous gel-like structure that may play a role in the water barrier permeability. May serve as a receptor for binding and endocytosis of cytokines (IL-1, IL-2) and TNF. Facilitates neutrophil migration across renal epithelia. Its function is as follows. In the urine, may contribute to colloid osmotic pressure, retards passage of positively charged electrolytes, and inhibits formation of liquid containing supersaturated salts and subsequent formation of salt crystals. Protects against urinary tract infections by binding to type 1 fimbriated E.coli. Binds to bacterial adhesin fimH which mediates the stable formation of bacterial aggregates, prevents the binding of E.coli to uroplakins UPK1A and UPK1B which act as urothelial receptors for type I fimbriae, and allows for pathogen clearance through micturation. Also promotes aggregation of other bacteria including K.pneumoniae, P.aeruginosa and S.mitis and so may also protect against other uropathogens. The polypeptide is Uromodulin (UMOD) (Pongo abelii (Sumatran orangutan)).